An 830-amino-acid chain; its full sequence is GPI ethanolamine phosphate transferase 2 (830 aa).

The N-terminal stretch at 1-32 (MNLKQFTCLSCAQLLAILLFIFAFFPRKIVLT) is a signal peptide. At 33–321 (GISKQDPDQD…QYLETVQQID (289 aa)) the chain is on the lumenal side. N-linked (GlcNAc...) asparagine glycosylation is found at asparagine 145, asparagine 185, and asparagine 298. A helical transmembrane segment spans residues 322–342 (IVPTIAALFGMPIPMNSVGII). Residues 343 to 405 (IPDFLQLLPN…TKSATNYNYP (63 aa)) are Cytoplasmic-facing. The chain crosses the membrane as a helical span at residues 406 to 426 (LLTLAFVGFLIITIIAIYVLL). Topologically, residues 427–439 (RYSGPDFWQLRVS) are lumenal. Residues 440–460 (SLSVLLVSIILGVSTFASSFI) form a helical membrane-spanning segment. The Cytoplasmic portion of the chain corresponds to 461–469 (EEEHQLWWW). The helical transmembrane segment at 470–490 (IVTAFSAVPLFVYRLNVLIIV) threads the bilayer. Over 491–533 (RWFIMMACVRSIKFWNNSGQKFIYSNVMSNLLNQNPSWKWCLN) the chain is Lumenal. Asparagine 506 is a glycosylation site (N-linked (GlcNAc...) asparagine). A helical membrane pass occupies residues 534–554 (MLTFLVLIMASAGFQVLHFIV). Topologically, residues 555–598 (TTILVGLCFTYKISWEIVNGNQAEIPLFMHDLLAKIDFAPTESN) are cytoplasmic. A helical membrane pass occupies residues 599–619 (LIVLARVFFQAWAIVVISRLV). Topologically, residues 620-651 (LTKLKVLNKNYLIKDMKVYITILLMFQTSSQN) are lumenal. Residues 652-672 (IGQFLVFQILESQIFYFFQNI) traverse the membrane as a helical segment. Over 673 to 682 (PTASLTSTSK) the chain is Cytoplasmic. The chain crosses the membrane as a helical span at residues 683 to 703 (IYFSNLVSLILQNFTFFQFGG). The Lumenal portion of the chain corresponds to 704–724 (TNSISTIDLGNAYHGVSSDYN). The chain crosses the membrane as a helical span at residues 725-745 (IYVVGILMSVANFAPAIYWSM). The Cytoplasmic segment spans residues 746 to 768 (LPWSINYASIPAQVKLQTFIRSK). A helical membrane pass occupies residues 769–789 (LPAFTYHCIFGTCLMTACVVL). Residues 790 to 805 (RFHLFIWSVFSPKLCY) lie on the Lumenal side of the membrane. A helical transmembrane segment spans residues 806–826 (FLGWNFVMGLLNGWLPELALL). Residues 827–830 (CALD) lie on the Cytoplasmic side of the membrane.

This sequence belongs to the PIGG/PIGN/PIGO family. PIGG subfamily. In terms of processing, N-glycosylated.

It localises to the endoplasmic reticulum membrane. It functions in the pathway glycolipid biosynthesis; glycosylphosphatidylinositol-anchor biosynthesis. Its function is as follows. Ethanolamine phosphate transferase involved in glycosylphosphatidylinositol-anchor biosynthesis. Transfers ethanolamine phosphate to the GPI second mannose. Although not essential, addition of ethanolamine phosphate to the second mannose plays an important role in cell separation via the GPI-based modification of daughter-specific proteins. In Saccharomyces cerevisiae (strain ATCC 204508 / S288c) (Baker's yeast), this protein is GPI ethanolamine phosphate transferase 2 (LAS21).